Reading from the N-terminus, the 310-residue chain is tRNA dimethylallyltransferase (310 aa).

Residue glycine 14–serine 21 coordinates ATP. Substrate is bound at residue threonine 16 to serine 21. Interaction with substrate tRNA regions lie at residues aspartate 39–glutamine 42 and glutamine 163–arginine 167.

Belongs to the IPP transferase family. As to quaternary structure, monomer. The cofactor is Mg(2+).

The enzyme catalyses adenosine(37) in tRNA + dimethylallyl diphosphate = N(6)-dimethylallyladenosine(37) in tRNA + diphosphate. Its function is as follows. Catalyzes the transfer of a dimethylallyl group onto the adenine at position 37 in tRNAs that read codons beginning with uridine, leading to the formation of N6-(dimethylallyl)adenosine (i(6)A). The chain is tRNA dimethylallyltransferase from Brucella abortus (strain S19).